Reading from the N-terminus, the 999-residue chain is Cytoplasmic dynein 2 intermediate chain 1 (999 aa).

Composition is skewed to basic and acidic residues over residues 1 to 19 (MEPG…DDLR), 29 to 138 (PKEE…EEIR), 146 to 260 (LLSR…EDRH), and 268 to 300 (GLHY…KELE). Positions 1–350 (MEPGKRRTKD…EHEAREKAEE (350 aa)) are disordered. At S250 the chain carries Phosphoserine. Residues 318–338 (LEDDFVDYEDDFEVCDGDDDS) are compositionally biased toward acidic residues. Residues 339–350 (NNEHEAREKAEE) are compositionally biased toward basic and acidic residues. The binding to the DYNLT2B-DYNLT1/DYNLT3 dimer stretch occupies residues 416–495 (ASHRQKSRSQ…DIQTEDIETR (80 aa)). 4 WD repeats span residues 637 to 677 (ICES…RIHH), 718 to 764 (AYKK…KADI), 850 to 890 (VRPI…PIMQ), and 895 to 935 (TSGH…LGPV).

This sequence belongs to the dynein light intermediate chain family. Intermediate chain of the cytoplasmic dynein complex 2, a multisubunit complex, composed at least of eleven different proteins. The cytoplasmic dynein 2 complex consists of two catalytic heavy chains (HCs) and a number of non-catalytic subunits presented by intermediate chains (ICs), light intermediate chains (LICs) and light chains (LCs). Among them, a heavy chain (DYNC2H1), two intermediate chains (DYNC2I2 and DYNC2I1), a light intermediate chain (DYNC2LI1), and a light chain (DYNLT2B) are unique to the cytoplasmic dynein complex 2, but a subset of the light chains are also shared by dynein-1 and dynein-2 complexes. Interacts with DYNC2I2; their C-terminal domains each bind a copy of the heavy chain, and their extended N-terminal regions are held together by an array of light chain dimers. Interacts with DYNLT2B. Interacts (via the N-terminal half) with DYNLT2B-DYNLT1 dimer or with DYNLT2B-DYNLT3 dimer; this interaction is crucial for retrograde trafficking of ciliary proteins.

The protein localises to the cell projection. It localises to the cilium. It is found in the cytoplasm. The protein resides in the cytoskeleton. Its subcellular location is the microtubule organizing center. The protein localises to the centrosome. In terms of biological role, acts as one of several non-catalytic accessory components of the cytoplasmic dynein 2 complex (dynein-2 complex), a motor protein complex that drives the movement of cargos along microtubules within cilia and flagella in concert with the intraflagellar transport (IFT) system. DYNC2I1 plays a major role in retrograde ciliary protein trafficking in cilia and flagella. Also requires to maintain a functional transition zone. The chain is Cytoplasmic dynein 2 intermediate chain 1 (Dync2i1) from Mus musculus (Mouse).